The sequence spans 948 residues: UvrABC system protein A (948 aa).

ATP is bound at residue 33–40 (GLSGSGKS). The C4-type zinc-finger motif lies at 252–279 (CPICGFSIGELEPRMFSFNSPFGACPTC). ABC transporter domains follow at residues 309 to 587 (WIPT…KKSL) and 607 to 935 (ASDR…KYLK). 639 to 646 (GVSGSGKS) lines the ATP pocket. The C4-type zinc finger occupies 738-764 (CEACKGDGIIKIEMHFLPDVYVPCEVC).

It belongs to the ABC transporter superfamily. UvrA family. Forms a heterotetramer with UvrB during the search for lesions.

The protein localises to the cytoplasm. In terms of biological role, the UvrABC repair system catalyzes the recognition and processing of DNA lesions. UvrA is an ATPase and a DNA-binding protein. A damage recognition complex composed of 2 UvrA and 2 UvrB subunits scans DNA for abnormalities. When the presence of a lesion has been verified by UvrB, the UvrA molecules dissociate. This Staphylococcus aureus (strain N315) protein is UvrABC system protein A.